A 183-amino-acid polypeptide reads, in one-letter code: UPF0302 protein BH3876 (183 aa).

Belongs to the UPF0302 family.

The polypeptide is UPF0302 protein BH3876 (Halalkalibacterium halodurans (strain ATCC BAA-125 / DSM 18197 / FERM 7344 / JCM 9153 / C-125) (Bacillus halodurans)).